A 424-amino-acid polypeptide reads, in one-letter code: MAAIIDIIGREILDSRGNPTVEVDVLLEDGSLGRAAVPSGASTGAHEAVELRDGGSRYKGKGVLNAIAAVNGDIFDAIGGMDASEQIQIDRTMIALDGTSNKSNLGANAILGVSLAIAKAQAASLGQPLFRYIGGPAARVLPVPMMNIVNGGEHADNPIDIQEFMIMPVAAGSLADAVRMGSEVFHTLKAELKSAGHNTNVGDEGGFAPNLASTEEAIGFIMKAIEKAGYKPGDDIYLALDAASTEFFKNGVYNLQGEGKKLDAGGMVDYWADLVGKYPIISIEDGMAEDDWEGWKALTDRIGSKVQLVGDDLFVTNKRRLADGIAKGTANSILVKVNQIGSLTETLESVEMAHKASYTAVMSHRSGETEDATIADLAVATNCGQIKTGSLARSDRLAKYNQLIRIEEALGPSGEYAGKSVLKG.

Residue Gln162 coordinates (2R)-2-phosphoglycerate. The Proton donor role is filled by Glu204. Residues Asp241, Glu284, and Asp311 each contribute to the Mg(2+) site. (2R)-2-phosphoglycerate contacts are provided by Lys336, Arg365, Ser366, and Lys387. The active-site Proton acceptor is the Lys336.

It belongs to the enolase family. The cofactor is Mg(2+).

It is found in the cytoplasm. It localises to the secreted. The protein resides in the cell surface. The enzyme catalyses (2R)-2-phosphoglycerate = phosphoenolpyruvate + H2O. Its pathway is carbohydrate degradation; glycolysis; pyruvate from D-glyceraldehyde 3-phosphate: step 4/5. Catalyzes the reversible conversion of 2-phosphoglycerate (2-PG) into phosphoenolpyruvate (PEP). It is essential for the degradation of carbohydrates via glycolysis. This is Enolase from Parvibaculum lavamentivorans (strain DS-1 / DSM 13023 / NCIMB 13966).